A 455-amino-acid polypeptide reads, in one-letter code: Immunoglobulin alpha-2 heavy chain (455 aa).

Ig-like domains lie at 1 to 95, 121 to 213, 227 to 322, and 330 to 432; these read EVQL…VYYC, PKVF…QDVT, PRLS…ANIT, and PEVH…KTID. Residues 1-115 are variable (V) domain, involved in antigen recognition; it reads EVQLVETGGG…GKGTTVTVSS (115 aa). 2 disulfides stabilise this stretch: Cys22-Cys95 and Cys141-Cys200. Positions 116–455 are constant (C) domain; it reads ASPTSPKVFP…VMAEADGTCY (340 aa). Asn162, Asn207, and Asn246 each carry an N-linked (GlcNAc...) asparagine glycan. Cystine bridges form between Cys225–Cys282 and Cys249–Cys306. An N-linked (GlcNAc...) asparagine glycan is attached at Asn320. A disulfide bridge connects residues Cys352 and Cys415. The N-linked (GlcNAc...) asparagine glycan is linked to Asn442.

In terms of assembly, immunoglobulins are composed of two identical heavy chains and two identical light chains; disulfide-linked. Monomeric or polymeric.

The protein resides in the secreted. It localises to the cell membrane. Immunoglobulins, also known as antibodies, are membrane-bound or secreted glycoproteins produced by B lymphocytes. In the recognition phase of humoral immunity, the membrane-bound immunoglobulins serve as receptors which, upon binding of a specific antigen, trigger the clonal expansion and differentiation of B lymphocytes into immunoglobulins-secreting plasma cells. Secreted immunoglobulins mediate the effector phase of humoral immunity, which results in the elimination of bound antigens. The antigen binding site is formed by the variable domain of one heavy chain, together with that of its associated light chain. Thus, each immunoglobulin has two antigen binding sites with remarkable affinity for a particular antigen. The variable domains are assembled by a process called V-(D)-J rearrangement and can then be subjected to somatic hypermutations which, after exposure to antigen and selection, allow affinity maturation for a particular antigen. Ig alpha is the major immunoglobulin class in body secretions. The protein is Immunoglobulin alpha-2 heavy chain of Homo sapiens (Human).